The chain runs to 243 residues: Ribonuclease 3 (243 aa).

One can recognise an RNase III domain in the interval 15-144; the sequence is NDTISKIINY…LIGAIYIDGG (130 aa). Residue Glu57 participates in Mg(2+) binding. Residue Asp61 is part of the active site. Mg(2+)-binding residues include Asn130 and Glu133. Residue Glu133 is part of the active site. A DRBM domain is found at 169–238; that stretch reads DPKTSLQEWT…AELMLEKINN (70 aa).

This sequence belongs to the ribonuclease III family. Homodimer. Requires Mg(2+) as cofactor.

It localises to the cytoplasm. The catalysed reaction is Endonucleolytic cleavage to 5'-phosphomonoester.. Functionally, digests double-stranded RNA. Involved in the processing of primary rRNA transcript to yield the immediate precursors to the large and small rRNAs (23S and 16S). Processes some mRNAs, and tRNAs when they are encoded in the rRNA operon. Processes pre-crRNA and tracrRNA of type II CRISPR loci if present in the organism. This Wolbachia sp. subsp. Brugia malayi (strain TRS) protein is Ribonuclease 3.